A 334-amino-acid polypeptide reads, in one-letter code: 7,8-didemethyl-8-hydroxy-5-deazariboflavin synthase (334 aa).

Residues 2–248 (VSYSKNVFVP…PDVPVQVPPN (247 aa)) form the Radical SAM core domain. Residues Cys16, Cys20, and Cys23 each contribute to the [4Fe-4S] cluster site.

This sequence belongs to the radical SAM superfamily. CofG family. In terms of assembly, consists of two subunits, CofG and CofH. The cofactor is [4Fe-4S] cluster.

The catalysed reaction is 5-amino-5-(4-hydroxybenzyl)-6-(D-ribitylimino)-5,6-dihydrouracil + S-adenosyl-L-methionine = 7,8-didemethyl-8-hydroxy-5-deazariboflavin + 5'-deoxyadenosine + L-methionine + NH4(+) + H(+). It functions in the pathway cofactor biosynthesis; coenzyme F0 biosynthesis. Functionally, catalyzes the radical-mediated synthesis of 7,8-didemethyl-8-hydroxy-5-deazariboflavin from 5-amino-5-(4-hydroxybenzyl)-6-(D-ribitylimino)-5,6-dihydrouracil. The protein is 7,8-didemethyl-8-hydroxy-5-deazariboflavin synthase of Methanopyrus kandleri (strain AV19 / DSM 6324 / JCM 9639 / NBRC 100938).